Here is a 155-residue protein sequence, read N- to C-terminus: Interleukin-2 (155 aa).

Positions 1 to 20 (MYKIQLLSCIALTLALVANG) are cleaved as a signal peptide. Thr23 carries O-linked (GalNAc...) threonine glycosylation. A disulfide bond links Cys79 and Cys127.

This sequence belongs to the IL-2 family.

Its subcellular location is the secreted. In terms of biological role, cytokine produced by activated CD4-positive helper T-cells and to a lesser extend activated CD8-positive T-cells and natural killer (NK) cells that plays pivotal roles in the immune response and tolerance. Binds to a receptor complex composed of either the high-affinity trimeric IL-2R (IL2RA/CD25, IL2RB/CD122 and IL2RG/CD132) or the low-affinity dimeric IL-2R (IL2RB and IL2RG). Interaction with the receptor leads to oligomerization and conformation changes in the IL-2R subunits resulting in downstream signaling starting with phosphorylation of JAK1 and JAK3. In turn, JAK1 and JAK3 phosphorylate the receptor to form a docking site leading to the phosphorylation of several substrates including STAT5. This process leads to activation of several pathways including STAT, phosphoinositide-3-kinase/PI3K and mitogen-activated protein kinase/MAPK pathways. Functions as a T-cell growth factor and can increase NK-cell cytolytic activity as well. Promotes strong proliferation of activated B-cells and subsequently immunoglobulin production. Plays a pivotal role in regulating the adaptive immune system by controlling the survival and proliferation of regulatory T-cells, which are required for the maintenance of immune tolerance. Moreover, participates in the differentiation and homeostasis of effector T-cell subsets, including Th1, Th2, Th17 as well as memory CD8-positive T-cells. This chain is Interleukin-2 (IL2), found in Ovis aries (Sheep).